A 100-amino-acid polypeptide reads, in one-letter code: Aspartyl/glutamyl-tRNA(Asn/Gln) amidotransferase subunit C (100 aa).

Belongs to the GatC family. In terms of assembly, heterotrimer of A, B and C subunits.

It catalyses the reaction L-glutamyl-tRNA(Gln) + L-glutamine + ATP + H2O = L-glutaminyl-tRNA(Gln) + L-glutamate + ADP + phosphate + H(+). It carries out the reaction L-aspartyl-tRNA(Asn) + L-glutamine + ATP + H2O = L-asparaginyl-tRNA(Asn) + L-glutamate + ADP + phosphate + 2 H(+). Its function is as follows. Allows the formation of correctly charged Asn-tRNA(Asn) or Gln-tRNA(Gln) through the transamidation of misacylated Asp-tRNA(Asn) or Glu-tRNA(Gln) in organisms which lack either or both of asparaginyl-tRNA or glutaminyl-tRNA synthetases. The reaction takes place in the presence of glutamine and ATP through an activated phospho-Asp-tRNA(Asn) or phospho-Glu-tRNA(Gln). This Streptococcus pneumoniae (strain P1031) protein is Aspartyl/glutamyl-tRNA(Asn/Gln) amidotransferase subunit C.